The primary structure comprises 910 residues: Protein translocase subunit SecA (910 aa).

ATP is bound by residues Gln-87, 105–109, and Asp-508; that span reads GEGKT. Positions 558–568 are enriched in basic and acidic residues; that stretch reads RHESRRIDNQL. 2 disordered regions span residues 558-580 and 873-910; these read RHES…DPGS and AAQQ…GQLS. Zn(2+)-binding residues include Cys-894, Cys-896, Cys-905, and His-906. Over residues 900–910 the composition is skewed to basic residues; that stretch reads KKYKHCHGQLS.

It belongs to the SecA family. In terms of assembly, monomer and homodimer. Part of the essential Sec protein translocation apparatus which comprises SecA, SecYEG and auxiliary proteins SecDF-YajC and YidC. Requires Zn(2+) as cofactor.

It localises to the cell inner membrane. The protein localises to the cytoplasm. The catalysed reaction is ATP + H2O + cellular proteinSide 1 = ADP + phosphate + cellular proteinSide 2.. Its function is as follows. Part of the Sec protein translocase complex. Interacts with the SecYEG preprotein conducting channel. Has a central role in coupling the hydrolysis of ATP to the transfer of proteins into and across the cell membrane, serving both as a receptor for the preprotein-SecB complex and as an ATP-driven molecular motor driving the stepwise translocation of polypeptide chains across the membrane. This Stenotrophomonas maltophilia (strain R551-3) protein is Protein translocase subunit SecA.